The following is a 390-amino-acid chain: Acetylornithine aminotransferase (390 aa).

Residues 103–104 and F129 each bind pyridoxal 5'-phosphate; that span reads GT. A N(2)-acetyl-L-ornithine-binding site is contributed by R132. 214-217 is a pyridoxal 5'-phosphate binding site; sequence DEVQ. An N6-(pyridoxal phosphate)lysine modification is found at K243. S271 lines the N(2)-acetyl-L-ornithine pocket. T272 is a pyridoxal 5'-phosphate binding site. An Isoglutamyl lysine isopeptide (Lys-Gln) (interchain with Q-Cter in protein Pup) cross-link involves residue K304.

This sequence belongs to the class-III pyridoxal-phosphate-dependent aminotransferase family. ArgD subfamily. Homodimer. Requires pyridoxal 5'-phosphate as cofactor.

It localises to the cytoplasm. It catalyses the reaction N(2)-acetyl-L-ornithine + 2-oxoglutarate = N-acetyl-L-glutamate 5-semialdehyde + L-glutamate. The protein operates within amino-acid biosynthesis; L-arginine biosynthesis; N(2)-acetyl-L-ornithine from L-glutamate: step 4/4. This is Acetylornithine aminotransferase from Mycolicibacterium smegmatis (strain ATCC 700084 / mc(2)155) (Mycobacterium smegmatis).